Reading from the N-terminus, the 346-residue chain is UDP-3-O-acylglucosamine N-acyltransferase (346 aa).

Residue His253 is the Proton acceptor of the active site.

This sequence belongs to the transferase hexapeptide repeat family. LpxD subfamily. As to quaternary structure, homotrimer.

It catalyses the reaction a UDP-3-O-[(3R)-3-hydroxyacyl]-alpha-D-glucosamine + a (3R)-hydroxyacyl-[ACP] = a UDP-2-N,3-O-bis[(3R)-3-hydroxyacyl]-alpha-D-glucosamine + holo-[ACP] + H(+). It functions in the pathway bacterial outer membrane biogenesis; LPS lipid A biosynthesis. In terms of biological role, catalyzes the N-acylation of UDP-3-O-acylglucosamine using 3-hydroxyacyl-ACP as the acyl donor. Is involved in the biosynthesis of lipid A, a phosphorylated glycolipid that anchors the lipopolysaccharide to the outer membrane of the cell. This is UDP-3-O-acylglucosamine N-acyltransferase from Rickettsia typhi (strain ATCC VR-144 / Wilmington).